Reading from the N-terminus, the 68-residue chain is UPF0352 protein CPS_2611 (68 aa).

This sequence belongs to the UPF0352 family.

The polypeptide is UPF0352 protein CPS_2611 (Colwellia psychrerythraea (strain 34H / ATCC BAA-681) (Vibrio psychroerythus)).